The chain runs to 367 residues: GMP synthase [glutamine-hydrolyzing] subunit B (367 aa).

Residues 2–190 (FDPASFVKEI…LKLPKEISER (189 aa)) enclose the GMPS ATP-PPase domain. Residue 29–35 (SGGVDST) participates in ATP binding.

Heterodimer composed of a glutamine amidotransferase subunit (A) and a GMP-binding subunit (B).

It carries out the reaction XMP + L-glutamine + ATP + H2O = GMP + L-glutamate + AMP + diphosphate + 2 H(+). Its pathway is purine metabolism; GMP biosynthesis; GMP from XMP (L-Gln route): step 1/1. Functionally, catalyzes the synthesis of GMP from XMP. The protein is GMP synthase [glutamine-hydrolyzing] subunit B of Saccharolobus islandicus (strain M.16.27) (Sulfolobus islandicus).